Reading from the N-terminus, the 376-residue chain is Actin, cytoplasmic (376 aa).

This sequence belongs to the actin family.

The protein localises to the cytoplasm. Its subcellular location is the cytoskeleton. It catalyses the reaction ATP + H2O = ADP + phosphate + H(+). Actins are highly conserved proteins that are involved in various types of cell motility and are ubiquitously expressed in all eukaryotic cells. The chain is Actin, cytoplasmic from Tetrahymena pyriformis.